A 126-amino-acid chain; its full sequence is MAILGLGTDIVEIDRIEAVISRSGDRLAKRVLSANEWAQYQAHQQPVRFLAKRFAVKEAAAKAFGTGIRNGLAFNQFEVFNDELGKPKLRLWDEAERLAARMGVTSVHVTLADERHYACATVIIES.

Mg(2+)-binding residues include Asp-9 and Glu-58.

It belongs to the P-Pant transferase superfamily. AcpS family. Mg(2+) is required as a cofactor.

Its subcellular location is the cytoplasm. It catalyses the reaction apo-[ACP] + CoA = holo-[ACP] + adenosine 3',5'-bisphosphate + H(+). Functionally, transfers the 4'-phosphopantetheine moiety from coenzyme A to a Ser of acyl-carrier-protein. The chain is Holo-[acyl-carrier-protein] synthase from Cronobacter sakazakii (strain ATCC BAA-894) (Enterobacter sakazakii).